The primary structure comprises 137 residues: GEL complex subunit OPTI (137 aa).

The Cytoplasmic segment spans residues 1–44; it reads MSGGRRKEEPPQPQLANGALKVSVWSKVLRSDAAWEDKDEFLDV. The chain crosses the membrane as a helical span at residues 45–65; sequence IYWFRQIIAVVLGVIWGVLPL. Position 66 (arginine 66) is a topological domain, lumenal. The chain crosses the membrane as a helical span at residues 67–84; sequence GFLGIAGFCLINAGVLYL. Over 85–103 the chain is Cytoplasmic; the sequence is YFSNYLQIDEEEYGGTWEL. A helical membrane pass occupies residues 104-127; the sequence is TKEGFMTSFALFMVCVADSFTTGH. Residues 128-137 are Lumenal-facing; sequence LDHLLHCHPL.

It belongs to the EMC6 family. As to quaternary structure, component of the GET- and EMC-like (GEL) complex, composed of RAB5IF/OPTI and TMCO1. The GEL complex is part of the multi-pass translocon (MPT) complex, composed of three subcomplexes, the GEL complex (composed of RAB5IF/OPTI and TMCO1), the BOS complex (composed of NCLN/Nicalin, NOMO and TMEM147) and the PAT complex (composed of WDR83OS/Asterix and CCDC47). The MPT complex associates with the SEC61 complex. Interacts with NDUFS3, NDUFA4, NDUFV1, NDUFA9 and NDUFS8 of the mitochondrial membrane respiratory chain NADH dehydrogenase (Complex I). Interacts with UQCRC2 of the ubiquinol-cytochrome c reductase complex (Complex III). Interacts with COX5A and COX7C of the cytochrome c oxidase complex (Complex IV). As to expression, expressed in embryonic stem cells and differentiated neuronal cells.

It localises to the endoplasmic reticulum membrane. Its subcellular location is the mitochondrion inner membrane. Its function is as follows. Component of the multi-pass translocon (MPT) complex that mediates insertion of multi-pass membrane proteins into the lipid bilayer of membranes. The MPT complex takes over after the SEC61 complex: following membrane insertion of the first few transmembrane segments of proteins by the SEC61 complex, the MPT complex occludes the lateral gate of the SEC61 complex to promote insertion of subsequent transmembrane regions. Within the MPT complex, the GEL subcomplex may mediate insertion of transmembrane regions into the membrane. In addition to its role in multi-pass membrane insertion, RAB5IF/OPTI also acts as an assembly factor for mitochondrial respiratory complexes. The sequence is that of GEL complex subunit OPTI from Homo sapiens (Human).